The sequence spans 798 residues: Nucleolin homolog 1 (798 aa).

The interval Met-1–Gln-548 is disordered. A compositionally biased stretch (gly residues) spans Gly-8–Arg-34. Composition is skewed to basic and acidic residues over residues Gly-59–Gly-75, Gly-88–Asp-98, and Gly-106–Asp-116. Gly residues-rich tracts occupy residues Arg-150 to Gly-164 and Gly-171 to Arg-184. 4 stretches are compositionally biased toward acidic residues: residues Ser-196–Glu-205, Asp-226–Pro-242, Glu-258–Ala-278, and Val-287–Glu-317. The span at Ser-328–Thr-350 shows a compositional bias: polar residues. Composition is skewed to acidic residues over residues Asp-378–Asp-404 and Ile-424–Thr-450. Positions Ala-467 to Ala-476 are enriched in low complexity. The span at Asp-478–Ile-504 shows a compositional bias: acidic residues. Over residues Val-532–Gln-548 the composition is skewed to basic and acidic residues. In terms of domain architecture, RRM spans Leu-638–His-713. The interval Pro-736–Lys-798 is disordered. Residues Ser-743 to Glu-762 show a composition bias toward acidic residues. Positions Gln-783–Lys-798 are enriched in basic residues.

In terms of assembly, identified in an mRNP granule complex containing untranslated mRNAs.

The protein resides in the nucleus. Its subcellular location is the nucleolus. Its function is as follows. Nucleolin is the major nucleolar protein of growing eukaryotic cells. It is found associated with intranucleolar chromatin and pre-ribosomal particles. It induces chromatin decondensation by binding to histone H1. It is thought to play a role in pre-rRNA transcription and ribosome assembly. May play a role in the process of transcriptional elongation. Involved in phase separation into sub-nucleolar condensates. This is Nucleolin homolog 1 from Caenorhabditis elegans.